The primary structure comprises 49 residues: Small, acid-soluble spore protein O (49 aa).

A disordered region spans residues 1–49 (MGKRKANHTISGMNAASAQGQGAGYNEEFANENLTAAERQNNKKRKKNQ). Polar residues predominate over residues 8 to 20 (HTISGMNAASAQG).

This sequence belongs to the SspO family.

The protein localises to the spore core. This chain is Small, acid-soluble spore protein O, found in Bacillus cereus (strain AH187).